A 365-amino-acid chain; its full sequence is Transcription factor MYB93 (365 aa).

HTH myb-type domains lie at 9–61 (ENGL…TNYL) and 62–116 (RPDI…KKKL). 2 consecutive DNA-binding regions (H-T-H motif) follow at residues 37–61 (WRAL…TNYL) and 89–112 (WSAI…NTHL).

In terms of assembly, interacts with FBX5.

The protein localises to the nucleus. The protein resides in the cytoplasm. Transcription factor that acts as a negative regulator of lateral root (LR) development. Required for normal auxin responses during LR development. May be part of a negative feedback loop stimulated specifically in the endodermis upon LR initiation to ensure that LRs are formed only in the correct place. This is Transcription factor MYB93 from Arabidopsis thaliana (Mouse-ear cress).